The sequence spans 53 residues: Large ribosomal subunit protein eL24 (53 aa).

4 residues coordinate Zn(2+): C4, C7, C30, and C34. Residues C4–C34 form a C4-type zinc finger.

It belongs to the eukaryotic ribosomal protein eL24 family. In terms of assembly, part of the 50S ribosomal subunit. Forms a cluster with proteins L3 and L14. Zn(2+) serves as cofactor.

Its function is as follows. Binds to the 23S rRNA. This chain is Large ribosomal subunit protein eL24, found in Methanobrevibacter smithii (strain ATCC 35061 / DSM 861 / OCM 144 / PS).